A 418-amino-acid chain; its full sequence is NADH-quinone oxidoreductase subunit D (418 aa).

Belongs to the complex I 49 kDa subunit family. NDH-1 is composed of 14 different subunits. Subunits NuoB, C, D, E, F, and G constitute the peripheral sector of the complex.

It is found in the cell inner membrane. It carries out the reaction a quinone + NADH + 5 H(+)(in) = a quinol + NAD(+) + 4 H(+)(out). Its function is as follows. NDH-1 shuttles electrons from NADH, via FMN and iron-sulfur (Fe-S) centers, to quinones in the respiratory chain. The immediate electron acceptor for the enzyme in this species is believed to be ubiquinone. Couples the redox reaction to proton translocation (for every two electrons transferred, four hydrogen ions are translocated across the cytoplasmic membrane), and thus conserves the redox energy in a proton gradient. The sequence is that of NADH-quinone oxidoreductase subunit D from Bordetella pertussis (strain Tohama I / ATCC BAA-589 / NCTC 13251).